The chain runs to 126 residues: Aspartate 1-decarboxylase (126 aa).

S25 acts as the Schiff-base intermediate with substrate; via pyruvic acid in catalysis. S25 bears the Pyruvic acid (Ser) mark. A substrate-binding site is contributed by T57. Y58 acts as the Proton donor in catalysis. 73 to 75 (GSA) provides a ligand contact to substrate.

The protein belongs to the PanD family. As to quaternary structure, heterooctamer of four alpha and four beta subunits. Pyruvate serves as cofactor. Post-translationally, is synthesized initially as an inactive proenzyme, which is activated by self-cleavage at a specific serine bond to produce a beta-subunit with a hydroxyl group at its C-terminus and an alpha-subunit with a pyruvoyl group at its N-terminus.

The protein resides in the cytoplasm. The enzyme catalyses L-aspartate + H(+) = beta-alanine + CO2. Its pathway is cofactor biosynthesis; (R)-pantothenate biosynthesis; beta-alanine from L-aspartate: step 1/1. Functionally, catalyzes the pyruvoyl-dependent decarboxylation of aspartate to produce beta-alanine. The polypeptide is Aspartate 1-decarboxylase (Acidovorax ebreus (strain TPSY) (Diaphorobacter sp. (strain TPSY))).